A 221-amino-acid chain; its full sequence is Endonuclease V (221 aa).

Mg(2+)-binding residues include aspartate 44 and aspartate 112.

This sequence belongs to the endonuclease V family. The cofactor is Mg(2+).

The protein resides in the cytoplasm. The catalysed reaction is Endonucleolytic cleavage at apurinic or apyrimidinic sites to products with a 5'-phosphate.. Its function is as follows. DNA repair enzyme involved in the repair of deaminated bases. Selectively cleaves double-stranded DNA at the second phosphodiester bond 3' to a deoxyinosine leaving behind the intact lesion on the nicked DNA. The chain is Endonuclease V from Trichormus variabilis (strain ATCC 29413 / PCC 7937) (Anabaena variabilis).